Consider the following 251-residue polypeptide: Ubiquinone/menaquinone biosynthesis C-methyltransferase UbiE (251 aa).

S-adenosyl-L-methionine is bound by residues Thr74, Asp95, and 123–124 (NA).

This sequence belongs to the class I-like SAM-binding methyltransferase superfamily. MenG/UbiE family.

The catalysed reaction is a 2-demethylmenaquinol + S-adenosyl-L-methionine = a menaquinol + S-adenosyl-L-homocysteine + H(+). It catalyses the reaction a 2-methoxy-6-(all-trans-polyprenyl)benzene-1,4-diol + S-adenosyl-L-methionine = a 5-methoxy-2-methyl-3-(all-trans-polyprenyl)benzene-1,4-diol + S-adenosyl-L-homocysteine + H(+). The protein operates within quinol/quinone metabolism; menaquinone biosynthesis; menaquinol from 1,4-dihydroxy-2-naphthoate: step 2/2. It participates in cofactor biosynthesis; ubiquinone biosynthesis. In terms of biological role, methyltransferase required for the conversion of demethylmenaquinol (DMKH2) to menaquinol (MKH2) and the conversion of 2-polyprenyl-6-methoxy-1,4-benzoquinol (DDMQH2) to 2-polyprenyl-3-methyl-6-methoxy-1,4-benzoquinol (DMQH2). This Marinomonas sp. (strain MWYL1) protein is Ubiquinone/menaquinone biosynthesis C-methyltransferase UbiE.